Reading from the N-terminus, the 265-residue chain is MICOS complex subunit Mic27 (265 aa).

The N-terminal 27 residues, 1 to 27 (MAAFRMGKLTTIPAGLIYASINVRLAK), are a transit peptide targeting the mitochondrion. Topologically, residues 28–110 (EEEPKKQLVR…YVYLKNPPQD (83 aa)) are mitochondrial intermembrane. A helical membrane pass occupies residues 111–129 (FLPKMGVITASGLAGLLSA). The Mitochondrial matrix portion of the chain corresponds to 130 to 137 (RKGSRFKK). Residues 138 to 155 (IAYPLGLATLGATVCYPA) form a helical membrane-spanning segment. Residues 156–265 (QSVIIAKITG…DDKDMYSTRS (110 aa)) are Mitochondrial intermembrane-facing. Disordered regions lie at residues 187-215 (SENE…PDLK) and 229-265 (VIKS…STRS). Ser204 is subject to Phosphoserine. Polar residues predominate over residues 229–241 (VIKSESTSGTTQF). The span at 246-265 (KLMDHGQSHPDDKDMYSTRS) shows a compositional bias: basic and acidic residues.

Belongs to the apolipoprotein O/MICOS complex subunit Mic27 family. As to quaternary structure, component of the mitochondrial contact site and cristae organizing system (MICOS) complex, composed of at least MICOS10/MIC10, CHCHD3/MIC19, CHCHD6/MIC25, APOOL/MIC27, IMMT/MIC60, APOO/MIC23/MIC26 and MICOS13/MIC13. This complex was also known under the names MINOS or MitOS complex. The MICOS complex associates with mitochondrial outer membrane proteins SAMM50, MTX1 and MTX2 (together described as components of the mitochondrial outer membrane sorting assembly machinery (SAM) complex) and DNAJC11, mitochondrial inner membrane protein TMEM11 and with HSPA9. The MICOS and SAM complexes together with DNAJC11 are part of a large protein complex spanning both membranes termed the mitochondrial intermembrane space bridging (MIB) complex. Interacts with MICOS10/MIC10, IMMT/MIC60 and APOO/MIC23/MIC26.

Its subcellular location is the mitochondrion inner membrane. The protein localises to the mitochondrion. Functionally, component of the MICOS complex, a large protein complex of the mitochondrial inner membrane that plays crucial roles in the maintenance of crista junctions, inner membrane architecture, and formation of contact sites to the outer membrane. Specifically binds to cardiolipin (in vitro) but not to the precursor lipid phosphatidylglycerol. Plays a crucial role in crista junction formation and mitochondrial function. The polypeptide is MICOS complex subunit Mic27 (Apool) (Mus musculus (Mouse)).